The following is a 146-amino-acid chain: Snaclec echicetin subunit beta (146 aa).

The N-terminal stretch at 1–23 is a signal peptide; that stretch reads MGRFISVSFGLLVLLLSLSGTGA. 3 disulfides stabilise this stretch: cysteine 25–cysteine 36, cysteine 53–cysteine 142, and cysteine 119–cysteine 134. The C-type lectin domain maps to 32–143; it reads YEGYCYKVFK…CTWTFSFVCK (112 aa).

Belongs to the snaclec family. As to quaternary structure, heterodimer of subunits alpha and beta; disulfide-linked. As to expression, expressed by the venom gland.

It localises to the secreted. In terms of biological role, binding of echicetin to glycoprotein Ibalpha (GP1BA) receptor on platelets alone results in inhibition of platelet aggregation, while binding to both GPIba receptor and IgMk promotes platelet aggregation and signal transduction. In Echis carinatus (Saw-scaled viper), this protein is Snaclec echicetin subunit beta.